The following is a 327-amino-acid chain: Malate dehydrogenase (327 aa).

Residue 11–17 (GAAGQIS) coordinates NAD(+). R92 and R98 together coordinate substrate. Residues N105, Q112, and 129–131 (VGN) each bind NAD(+). Substrate is bound by residues N131 and R162. The active-site Proton acceptor is H187.

Belongs to the LDH/MDH superfamily. MDH type 2 family.

The catalysed reaction is (S)-malate + NAD(+) = oxaloacetate + NADH + H(+). Catalyzes the reversible oxidation of malate to oxaloacetate. This Saccharophagus degradans (strain 2-40 / ATCC 43961 / DSM 17024) protein is Malate dehydrogenase.